A 519-amino-acid chain; its full sequence is Histidine ammonia-lyase (519 aa).

The segment at residues 146 to 148 (ASG) is a cross-link (5-imidazolinone (Ala-Gly)). Ser147 bears the 2,3-didehydroalanine (Ser) mark.

This sequence belongs to the PAL/histidase family. Contains an active site 4-methylidene-imidazol-5-one (MIO), which is formed autocatalytically by cyclization and dehydration of residues Ala-Ser-Gly.

The protein resides in the cytoplasm. The enzyme catalyses L-histidine = trans-urocanate + NH4(+). The protein operates within amino-acid degradation; L-histidine degradation into L-glutamate; N-formimidoyl-L-glutamate from L-histidine: step 1/3. The polypeptide is Histidine ammonia-lyase (Psychrobacter sp. (strain PRwf-1)).